A 423-amino-acid chain; its full sequence is Glutamyl-tRNA reductase 2 (423 aa).

Substrate-binding positions include 48–51 (TCYR), S103, 108–110 (EPQ), and Q114. The active-site Nucleophile is C49. 183–188 (GAGEMA) is an NADP(+) binding site.

This sequence belongs to the glutamyl-tRNA reductase family. In terms of assembly, homodimer.

It carries out the reaction (S)-4-amino-5-oxopentanoate + tRNA(Glu) + NADP(+) = L-glutamyl-tRNA(Glu) + NADPH + H(+). It participates in porphyrin-containing compound metabolism; protoporphyrin-IX biosynthesis; 5-aminolevulinate from L-glutamyl-tRNA(Glu): step 1/2. Functionally, catalyzes the NADPH-dependent reduction of glutamyl-tRNA(Glu) to glutamate 1-semialdehyde (GSA). This Anaeromyxobacter sp. (strain Fw109-5) protein is Glutamyl-tRNA reductase 2.